A 97-amino-acid chain; its full sequence is SAGA-associated factor 11 (97 aa).

An SGF11-type zinc finger spans residues 70-91 (IECNVCGREVSGNRFAAHLVRC).

It belongs to the SGF11 family. As to quaternary structure, component of the 1.8 MDa SAGA transcription coactivator-HAT complex. SAGA is built of 5 distinct domains with specialized functions. Within the SAGA complex, SUS1, SGF11, SGF73 and UBP8 form an additional subcomplex of SAGA called the DUB module (deubiquitination module). Interacts directly with SGF73, SUS1 and UBP8.

It is found in the nucleus. Functions as a component of the transcription regulatory histone acetylation (HAT) complex SAGA. At the promoters, SAGA is required for recruitment of the basal transcription machinery. It influences RNA polymerase II transcriptional activity through different activities such as TBP interaction and promoter selectivity, interaction with transcription activators, and chromatin modification through histone acetylation and deubiquitination. SAGA acetylates nucleosomal histone H3 to some extent (to form H3K9ac, H3K14ac, H3K18ac and H3K23ac). SAGA interacts with DNA via upstream activating sequences (UASs). Involved in transcriptional regulation of a subset of SAGA-regulated genes. Within the SAGA complex, participates in a subcomplex, that specifically deubiquitinates histones H2B. In Kluyveromyces lactis (strain ATCC 8585 / CBS 2359 / DSM 70799 / NBRC 1267 / NRRL Y-1140 / WM37) (Yeast), this protein is SAGA-associated factor 11.